A 131-amino-acid chain; its full sequence is MMTDPIADMLTRIRNAALARHDRTEVPASRIKAAVAEILKSEGFIADVRETEGEGPKKLTIVLKYGRDRQSAIDGVRRVSRPGRRVYVRHDRIPRVFSGLGISILSTSRGLMSDRDARRLKMGGELICEVW.

Belongs to the universal ribosomal protein uS8 family. As to quaternary structure, part of the 30S ribosomal subunit. Contacts proteins S5 and S12.

In terms of biological role, one of the primary rRNA binding proteins, it binds directly to 16S rRNA central domain where it helps coordinate assembly of the platform of the 30S subunit. This chain is Small ribosomal subunit protein uS8, found in Sorangium cellulosum (strain So ce56) (Polyangium cellulosum (strain So ce56)).